Consider the following 75-residue polypeptide: MGISIWQLLIVLGIVILLFGTKKLRNIGSDLGGAIRGFKKSMSDEEEKNAEQQPLEKQNAEQQAQAEDKPKEKQG.

Residues 1–21 (MGISIWQLLIVLGIVILLFGT) form a helical membrane-spanning segment. The segment at 41–75 (SMSDEEEKNAEQQPLEKQNAEQQAQAEDKPKEKQG) is disordered. Over residues 56–65 (EKQNAEQQAQ) the composition is skewed to low complexity. The segment covering 66–75 (AEDKPKEKQG) has biased composition (basic and acidic residues).

Belongs to the TatA/E family. In terms of assembly, the Tat system comprises two distinct complexes: a TatABC complex, containing multiple copies of TatA, TatB and TatC subunits, and a separate TatA complex, containing only TatA subunits. Substrates initially bind to the TatABC complex, which probably triggers association of the separate TatA complex to form the active translocon.

Its subcellular location is the cell inner membrane. Its function is as follows. Part of the twin-arginine translocation (Tat) system that transports large folded proteins containing a characteristic twin-arginine motif in their signal peptide across membranes. TatA could form the protein-conducting channel of the Tat system. The chain is Sec-independent protein translocase protein TatA from Marinobacter nauticus (strain ATCC 700491 / DSM 11845 / VT8) (Marinobacter aquaeolei).